The primary structure comprises 241 residues: Ubiquinone biosynthesis O-methyltransferase (241 aa).

The S-adenosyl-L-methionine site is built by R46, G66, D87, and M131.

This sequence belongs to the methyltransferase superfamily. UbiG/COQ3 family.

It carries out the reaction a 3-demethylubiquinol + S-adenosyl-L-methionine = a ubiquinol + S-adenosyl-L-homocysteine + H(+). It catalyses the reaction a 3-(all-trans-polyprenyl)benzene-1,2-diol + S-adenosyl-L-methionine = a 2-methoxy-6-(all-trans-polyprenyl)phenol + S-adenosyl-L-homocysteine + H(+). It participates in cofactor biosynthesis; ubiquinone biosynthesis. O-methyltransferase that catalyzes the 2 O-methylation steps in the ubiquinone biosynthetic pathway. The chain is Ubiquinone biosynthesis O-methyltransferase from Bordetella avium (strain 197N).